The chain runs to 215 residues: uncharacterized protein (215 aa).

The next 2 membrane-spanning stretches (helical) occupy residues 40-60 and 72-92; these read VLFP…FCSL and LIWF…VGYL.

It is found in the mitochondrion membrane. This is an uncharacterized protein from Arabidopsis thaliana (Mouse-ear cress).